Consider the following 164-residue polypeptide: Lectin (164 aa).

The N-terminal stretch at T1 to A15 is a signal peptide. The 110-residue stretch at R16 to K125 folds into the Bulb-type lectin domain. C44 and C68 form a disulfide bridge.

As to quaternary structure, homotetramer. Post-translationally, not glycosylated.

In terms of biological role, mannose-specific lectin. Induces a Th1-type immune response in vitro. Causes a 4-fold increase in the proliferation of murine thymocytes and a significant increase in the production of nitric oxide at 24 hours in a macrophage cell line. Stimulates the production of the pro-inflammatory cytokines TNF and IL12 by rat peritoneal macrophages in a dose-dependent manner and of the cytokines IFNG and IL2 in murine thymocytes. Has hemagglutination activity towards rabbit erythrocytes. The polypeptide is Lectin (Allium cepa (Onion)).